Consider the following 119-residue polypeptide: Ribonuclease P protein component (119 aa).

Belongs to the RnpA family. As to quaternary structure, consists of a catalytic RNA component (M1 or rnpB) and a protein subunit.

It catalyses the reaction Endonucleolytic cleavage of RNA, removing 5'-extranucleotides from tRNA precursor.. In terms of biological role, RNaseP catalyzes the removal of the 5'-leader sequence from pre-tRNA to produce the mature 5'-terminus. It can also cleave other RNA substrates such as 4.5S RNA. The protein component plays an auxiliary but essential role in vivo by binding to the 5'-leader sequence and broadening the substrate specificity of the ribozyme. This is Ribonuclease P protein component from Klebsiella pneumoniae (strain 342).